A 450-amino-acid polypeptide reads, in one-letter code: Phosphoglucosamine mutase (450 aa).

The Phosphoserine intermediate role is filled by serine 101. Residues serine 101, aspartate 240, aspartate 242, and aspartate 244 each coordinate Mg(2+). Serine 101 bears the Phosphoserine mark.

This sequence belongs to the phosphohexose mutase family. The cofactor is Mg(2+). Post-translationally, activated by phosphorylation.

The enzyme catalyses alpha-D-glucosamine 1-phosphate = D-glucosamine 6-phosphate. In terms of biological role, catalyzes the conversion of glucosamine-6-phosphate to glucosamine-1-phosphate. This is Phosphoglucosamine mutase from Streptococcus gordonii (strain Challis / ATCC 35105 / BCRC 15272 / CH1 / DL1 / V288).